Reading from the N-terminus, the 577-residue chain is Cleavage stimulation factor subunit 2 (577 aa).

S14 bears the Phosphoserine mark. One can recognise an RRM domain in the interval 16-94; the sequence is RSVFVGNIPY…RALRVDNAAS (79 aa). Residues 108–248 form an interactions with CSTF3 and SYMPK region; the sequence is APVIESPYGE…VNGAPPLMQA (141 aa). A Glycyl lysine isopeptide (Lys-Gly) (interchain with G-Cter in SUMO2) cross-link involves residue K189. The tract at residues 207 to 230 is disordered; it reads PVHGAGPGSGSNVSMNQQNPQAPQ. R308 carries the post-translational modification Omega-N-methylarginine. Residues 319–409 are disordered; sequence RGLLGDAPND…DGRGGRDPRG (91 aa). A compositionally biased stretch (basic and acidic residues) spans 360–373; sequence PGHESRGPPPHELR. One copy of the 1; approximate repeat lies at 410–414; that stretch reads IDARG. The interval 410–469 is 12 X 5 AA tandem repeats of M-E-A-R-[AG]; the sequence is IDARGMEARAMEARGLDARGLEARAMEARAMEARAMEARAMEARAMEVRGMEARGMDTRG. 2 tandem repeats follow at residues 415–419 and 420–424. The 4; approximate repeat unit spans residues 425 to 429; the sequence is LDARG. The stretch at 430–434 is one 5; approximate repeat; it reads LEARA. Repeat copies occupy residues 435 to 439, 440 to 444, 445 to 449, and 450 to 454. A 10; approximate repeat occupies 455–459; that stretch reads MEVRG. Residues 460 to 464 form repeat 11; that stretch reads MEARG. The 12; approximate repeat unit spans residues 465–469; the sequence is MDTRG. An omega-N-methylarginine mark is found at R468 and R475. A disordered region spans residues 509 to 532; sequence LQGASIQGGSQPGGFSPGQNQVTP. The tract at residues 514–577 is interaction with RPO2TC1; it reads IQGGSQPGGF…EQIQKSTGAP (64 aa). Phosphoserine occurs at positions 518 and 524.

The CSTF complex is composed of CSTF1 (50 kDa subunit), CSTF2 (64 kDa subunit) and CSTF3 (77 kDa subunit). CSTF2 directly interacts with CSTF3, SYMPK and RPO2TC1. Interacts with HSF1 in heat-stressed cells. Interacts with CPSF2, CPSF3 and FIP1L1. Interacts with DDX1.

The protein resides in the nucleus. Functionally, one of the multiple factors required for polyadenylation and 3'-end cleavage of mammalian pre-mRNAs. This subunit is directly involved in the binding to pre-mRNAs. This is Cleavage stimulation factor subunit 2 (CSTF2) from Pongo abelii (Sumatran orangutan).